The sequence spans 739 residues: Disintegrin and metalloproteinase domain-containing protein 18 (739 aa).

The first 16 residues, Met-1–Ala-16, serve as a signal peptide directing secretion. The propeptide occupies His-17–Gln-184. Residues Asn-36, Asn-76, Asn-122, Asn-149, Asn-156, Asn-177, and Asn-294 are each glycosylated (N-linked (GlcNAc...) asparagine). Residues Asn-177 to Asn-687 are Extracellular-facing. The Peptidase M12B domain occupies Gln-184–Ser-381. 4 disulfides stabilise this stretch: Cys-293-Cys-376, Cys-335-Cys-360, Cys-337-Cys-342, and Cys-450-Cys-471. N-linked (GlcNAc...) asparagine glycosylation is found at Asn-359, Asn-465, Asn-561, Asn-611, and Asn-625. A Disintegrin domain is found at Gln-390 to Asn-479. In terms of domain architecture, EGF-like spans Met-620–Lys-654. Cystine bridges form between Cys-624–Cys-636, Cys-630–Cys-642, and Cys-644–Cys-653. The chain crosses the membrane as a helical span at residues Trp-688–Phe-708. Topologically, residues Lys-709 to His-739 are cytoplasmic.

Post-translationally, the prodomain and the metalloprotease-like domain are cleaved during the epididymal maturation of the spermatozoa. In terms of tissue distribution, expressed specifically in testis.

It is found in the membrane. Functionally, sperm surface membrane protein that may be involved in spermatogenesis and fertilization. This is a non catalytic metalloprotease-like protein. This chain is Disintegrin and metalloproteinase domain-containing protein 18 (ADAM18), found in Homo sapiens (Human).